The following is a 225-amino-acid chain: Alpha-tubulin N-acetyltransferase 1 (225 aa).

One can recognise an N-acetyltransferase domain in the interval 1–190; the sequence is MEFPFDVDAL…NNFVIFEGFF (190 aa). Residue K56 is modified to N6-acetyllysine; by autocatalysis. Position 124–137 (124–137) interacts with acetyl-CoA; that stretch reads FYIHESLQRHGHGR. K146 bears the N6-acetyllysine; by autocatalysis mark. 160 to 169 serves as a coordination point for acetyl-CoA; that stretch reads SQKLLKFLNK. Positions 195 to 225 are disordered; it reads PPARKLPPKRAEGDIKPYSSSDRESGLPQGW. Positions 203-219 are enriched in basic and acidic residues; sequence KRAEGDIKPYSSSDRES. K210 is modified (N6-acetyllysine; by autocatalysis).

This sequence belongs to the acetyltransferase ATAT1 family. Component of the BBSome complex. Interacts with AP2 alpha-adaptins, including AP2A2, but not with AP1 gamma-adaptin (AP1G1/AP1G2); this interaction is required for efficient alpha-tubulin acetylation, hence clathrin-coated pits are sites of microtubule acetylation. Autoacetylation strongly increases tubulin acetylation.

The protein localises to the cytoplasm. The protein resides in the membrane. Its subcellular location is the clathrin-coated pit. It is found in the cell junction. It localises to the focal adhesion. The protein localises to the cell projection. The protein resides in the axon. Its subcellular location is the cytoskeleton. It is found in the spindle. It catalyses the reaction L-lysyl-[alpha-tubulin] + acetyl-CoA = N(6)-acetyl-L-lysyl-[alpha-tubulin] + CoA + H(+). Functionally, specifically acetylates 'Lys-40' in alpha-tubulin on the lumenal side of microtubules. Promotes microtubule destabilization and accelerates microtubule dynamics; this activity may be independent of acetylation activity. Acetylates alpha-tubulin with a slow enzymatic rate, due to a catalytic site that is not optimized for acetyl transfer. Enters the microtubule through each end and diffuses quickly throughout the lumen of microtubules. Acetylates only long/old microtubules because of its slow acetylation rate since it does not have time to act on dynamically unstable microtubules before the enzyme is released. Required for normal sperm flagellar function. Promotes directional cell locomotion and chemotaxis, through AP2A2-dependent acetylation of alpha-tubulin at clathrin-coated pits that are concentrated at the leading edge of migrating cells. May facilitate primary cilium assembly. The chain is Alpha-tubulin N-acetyltransferase 1 from Bos taurus (Bovine).